We begin with the raw amino-acid sequence, 396 residues long: Cytochrome b (396 aa).

4 consecutive transmembrane segments (helical) span residues 37 to 57, 81 to 102, 117 to 137, and 182 to 202; these read FGSLLSLCLILQIITGLILAM, WLMRNLHANGASMFFICIYAHI, WNVGVILFALTAATAFVGYVL, and FFTFHFILPFILAAMTMIHIM. Positions 87 and 101 each coordinate heme b. Residues histidine 186 and histidine 200 each coordinate heme b. Histidine 205 provides a ligand contact to a ubiquinone. Helical transmembrane passes span 230–250, 292–312, 324–344, and 351–371; these read FKDILGFVILLGILFMISLLA, LGGVVALAAAIMILLIIPFTH, LAQITFWILIADLALLTWLGG, and FILMTQIASTVYFMIFILVFP.

The protein belongs to the cytochrome b family. The cytochrome bc1 complex contains 3 respiratory subunits (MT-CYB, CYC1 and UQCRFS1), 2 core proteins (UQCRC1 and UQCRC2) and probably 6 low-molecular weight proteins. Heme b serves as cofactor.

It localises to the mitochondrion inner membrane. Component of the ubiquinol-cytochrome c reductase complex (complex III or cytochrome b-c1 complex) that is part of the mitochondrial respiratory chain. The b-c1 complex mediates electron transfer from ubiquinol to cytochrome c. Contributes to the generation of a proton gradient across the mitochondrial membrane that is then used for ATP synthesis. The sequence is that of Cytochrome b (mt-cyb) from Petromyzon marinus (Sea lamprey).